The chain runs to 498 residues: Fascin-3 (498 aa).

The protein belongs to the fascin family. In terms of tissue distribution, expressed in testis.

It is found in the cytoplasm. It localises to the cytoskeleton. Acts as an actin bundling protein. The chain is Fascin-3 (Fscn3) from Mus musculus (Mouse).